A 159-amino-acid polypeptide reads, in one-letter code: Ribosomal RNA large subunit methyltransferase H (159 aa).

S-adenosyl-L-methionine is bound by residues L76, G108, and 127 to 132; that span reads FSKMTF.

Belongs to the RNA methyltransferase RlmH family. As to quaternary structure, homodimer.

Its subcellular location is the cytoplasm. It carries out the reaction pseudouridine(1915) in 23S rRNA + S-adenosyl-L-methionine = N(3)-methylpseudouridine(1915) in 23S rRNA + S-adenosyl-L-homocysteine + H(+). Functionally, specifically methylates the pseudouridine at position 1915 (m3Psi1915) in 23S rRNA. This chain is Ribosomal RNA large subunit methyltransferase H, found in Bifidobacterium adolescentis (strain ATCC 15703 / DSM 20083 / NCTC 11814 / E194a).